We begin with the raw amino-acid sequence, 297 residues long: HTH-type transcriptional regulator ArgP (297 aa).

Residues 4–60 (PDYRTLQALDAVIRERGFERAAQKLCITQSAVSQRIKQLENLFGQPLLVRTVPPRPT) form the HTH lysR-type domain. Positions 21–40 (FERAAQKLCITQSAVSQRIK) form a DNA-binding region, H-T-H motif.

This sequence belongs to the LysR transcriptional regulatory family. In terms of assembly, homodimer.

Controls the transcription of genes involved in arginine and lysine metabolism. This is HTH-type transcriptional regulator ArgP from Serratia proteamaculans (strain 568).